A 401-amino-acid chain; its full sequence is 3-hydroxyisobutyryl-CoA hydrolase-like protein 1, mitochondrial (401 aa).

Residues 1 to 26 (MHNAKGLLGRIVRDKLWRFGYRRSLC) constitute a mitochondrion transit peptide.

Belongs to the enoyl-CoA hydratase/isomerase family.

Its subcellular location is the mitochondrion. This chain is 3-hydroxyisobutyryl-CoA hydrolase-like protein 1, mitochondrial, found in Arabidopsis thaliana (Mouse-ear cress).